Consider the following 1072-residue polypeptide: Carbamoyl phosphate synthase large chain (1072 aa).

Residues 1 to 401 are carboxyphosphate synthetic domain; the sequence is MPKRLDINTI…SLLKAVRSLE (401 aa). The ATP site is built by R129, R169, G175, G176, K208, I210, E215, G241, V242, H243, Q284, and E298. The ATP-grasp 1 domain occupies 133–327; the sequence is RTLMQELNEP…IAKLAAKIAV (195 aa). Residues Q284, E298, and N300 each coordinate Mg(2+). Residues Q284, E298, and N300 each coordinate Mn(2+). The segment at 402-546 is oligomerization domain; that stretch reads LGIYHLELDH…YSTYADENEL (145 aa). Residues 547–929 form a carbamoyl phosphate synthetic domain region; sequence IVTDRKSVVV…ALYKGLVASG (383 aa). The ATP-grasp 2 domain occupies 671-861; the sequence is EAALTKLGIP…MANVATKVIL (191 aa). 9 residues coordinate ATP: R707, R746, E752, G777, V778, H779, S780, Q820, and E832. Residues Q820, E832, and N834 each contribute to the Mg(2+) site. Positions 820, 832, and 834 each coordinate Mn(2+). The MGS-like domain occupies 930–1072; sequence INIPTHGSVI…QTKRHEVVHA (143 aa). The segment at 930–1072 is allosteric domain; that stretch reads INIPTHGSVI…QTKRHEVVHA (143 aa).

The protein belongs to the CarB family. In terms of assembly, composed of two chains; the small (or glutamine) chain promotes the hydrolysis of glutamine to ammonia, which is used by the large (or ammonia) chain to synthesize carbamoyl phosphate. Tetramer of heterodimers (alpha,beta)4. The cofactor is Mg(2+). Requires Mn(2+) as cofactor.

The catalysed reaction is hydrogencarbonate + L-glutamine + 2 ATP + H2O = carbamoyl phosphate + L-glutamate + 2 ADP + phosphate + 2 H(+). It catalyses the reaction hydrogencarbonate + NH4(+) + 2 ATP = carbamoyl phosphate + 2 ADP + phosphate + 2 H(+). It functions in the pathway amino-acid biosynthesis; L-arginine biosynthesis; carbamoyl phosphate from bicarbonate: step 1/1. The protein operates within pyrimidine metabolism; UMP biosynthesis via de novo pathway; (S)-dihydroorotate from bicarbonate: step 1/3. Functionally, large subunit of the glutamine-dependent carbamoyl phosphate synthetase (CPSase). CPSase catalyzes the formation of carbamoyl phosphate from the ammonia moiety of glutamine, carbonate, and phosphate donated by ATP, constituting the first step of 2 biosynthetic pathways, one leading to arginine and/or urea and the other to pyrimidine nucleotides. The large subunit (synthetase) binds the substrates ammonia (free or transferred from glutamine from the small subunit), hydrogencarbonate and ATP and carries out an ATP-coupled ligase reaction, activating hydrogencarbonate by forming carboxy phosphate which reacts with ammonia to form carbamoyl phosphate. The protein is Carbamoyl phosphate synthase large chain of Bacillus anthracis (strain A0248).